A 949-amino-acid chain; its full sequence is Glycine dehydrogenase (decarboxylating) (949 aa).

At Lys702 the chain carries N6-(pyridoxal phosphate)lysine.

Belongs to the GcvP family. In terms of assembly, the glycine cleavage system is composed of four proteins: P, T, L and H. Requires pyridoxal 5'-phosphate as cofactor.

It catalyses the reaction N(6)-[(R)-lipoyl]-L-lysyl-[glycine-cleavage complex H protein] + glycine + H(+) = N(6)-[(R)-S(8)-aminomethyldihydrolipoyl]-L-lysyl-[glycine-cleavage complex H protein] + CO2. Its function is as follows. The glycine cleavage system catalyzes the degradation of glycine. The P protein binds the alpha-amino group of glycine through its pyridoxal phosphate cofactor; CO(2) is released and the remaining methylamine moiety is then transferred to the lipoamide cofactor of the H protein. In Rhodococcoides fascians (Rhodococcus fascians), this protein is Glycine dehydrogenase (decarboxylating).